Reading from the N-terminus, the 209-residue chain is Large ribosomal subunit protein uL3 (209 aa).

The segment at 128 to 163 (AHRGPMTHGSKFHRAVGSMGASSDPSRTFKNKRMPG) is disordered.

The protein belongs to the universal ribosomal protein uL3 family. As to quaternary structure, part of the 50S ribosomal subunit. Forms a cluster with proteins L14 and L19.

Its function is as follows. One of the primary rRNA binding proteins, it binds directly near the 3'-end of the 23S rRNA, where it nucleates assembly of the 50S subunit. In Clostridium botulinum (strain 657 / Type Ba4), this protein is Large ribosomal subunit protein uL3.